Here is a 226-residue protein sequence, read N- to C-terminus: MKKAVILISGGLDSTTCLAVAKSKGFACYALSFDYGQKHHSELVAAEKIAAHFNVVRYEVVTLSIGKLGGSALTDNSLDVPDYGGNESIPITYVPARNTIFLSIALGWAEILDAESILIGASAIDYSGYPDCRPEYIAAFQNLANLATKRGIEGHSIKIEAPLIHLSKAETIKLGYSLGVDYSMTVSCYRANEEGLACGYCDSCELRKKGFKEAEIKDPTQYITKV.

8–18 is a binding site for ATP; it reads ISGGLDSTTCL. The Zn(2+) site is built by cysteine 188, cysteine 198, cysteine 201, and cysteine 204.

This sequence belongs to the QueC family. It depends on Zn(2+) as a cofactor.

It carries out the reaction 7-carboxy-7-deazaguanine + NH4(+) + ATP = 7-cyano-7-deazaguanine + ADP + phosphate + H2O + H(+). Its pathway is purine metabolism; 7-cyano-7-deazaguanine biosynthesis. Catalyzes the ATP-dependent conversion of 7-carboxy-7-deazaguanine (CDG) to 7-cyano-7-deazaguanine (preQ(0)). The sequence is that of 7-cyano-7-deazaguanine synthase from Coxiella burnetii (strain Dugway 5J108-111).